The sequence spans 312 residues: Ribosomal RNA small subunit methyltransferase H (312 aa).

Residues 35–37 (GGH), aspartate 55, phenylalanine 79, aspartate 101, and glutamine 108 contribute to the S-adenosyl-L-methionine site.

It belongs to the methyltransferase superfamily. RsmH family.

Its subcellular location is the cytoplasm. It carries out the reaction cytidine(1402) in 16S rRNA + S-adenosyl-L-methionine = N(4)-methylcytidine(1402) in 16S rRNA + S-adenosyl-L-homocysteine + H(+). Functionally, specifically methylates the N4 position of cytidine in position 1402 (C1402) of 16S rRNA. The polypeptide is Ribosomal RNA small subunit methyltransferase H (Buchnera aphidicola subsp. Acyrthosiphon pisum (strain APS) (Acyrthosiphon pisum symbiotic bacterium)).